Here is a 335-residue protein sequence, read N- to C-terminus: MKIKATIDRIPGGLMLVPLLLGAILHTAAPGTAEYFGSFTKGIITGTLPILSVWFFCIGASIDLRATGTVLRKSGTLVLTKIAVAWVVALIAAQLLPEYGIEVGMLAGLSTLALVSAMDMTNGGLYASLMNQYGSKEESGAFVLMSVESGPLMTMVILGSAGLASFQPHHFVGAVLPFLIGFALGNLDHDLREFFSRATQTLIPFFGFALGNTINLGVILDTGLLGIAMGLLVIVVTGIPLIIADRLIGGGNGTAGLAASSTAGAAVANPVIIAQMNPAFAKIAPAATALVATCVIVTSILVPILTAMYAKRMGNPMPAQHGASAGKEKMAPEMH.

10 helical membrane-spanning segments follow: residues 10 to 30, 42 to 62, 77 to 97, 100 to 120, 141 to 161, 163 to 183, 200 to 220, 224 to 244, 254 to 274, and 289 to 309; these read IPGG…TAAP, GIIT…GASI, LVLT…QLLP, GIEV…AMDM, AFVL…LGSA, LASF…IGFA, QTLI…GVIL, LLGI…LIIA, TAGL…VIIA, and ALVA…TAMY.

It belongs to the KdgT transporter family.

Its subcellular location is the cell inner membrane. It carries out the reaction 2-dehydro-3-deoxy-D-gluconate(in) + H(+)(in) = 2-dehydro-3-deoxy-D-gluconate(out) + H(+)(out). Its function is as follows. Catalyzes the proton-dependent uptake of 2-keto-3-deoxygluconate (KDG) into the cell. The protein is 2-keto-3-deoxygluconate permease of Tolumonas auensis (strain DSM 9187 / NBRC 110442 / TA 4).